A 1129-amino-acid polypeptide reads, in one-letter code: CRISPR-associated endonuclease Cas12b (1129 aa).

The WED-I (OBD-I) domain stretch occupies residues 1–14; it reads MAVKSIKVKLRLDD. The interval 4–9 is binds sgRNA; the sequence is KSIKVK. An REC1 (Helical-1)domain region spans residues 15 to 386; it reads MPEIRAGLWK…FATFTLPDAT (372 aa). Binds DNA protospacer adjacent motif (PAM) on target DNA stretches follow at residues 118–122 and 143–144; these read QQIAR and GN. Positions 387–518 are WED-II (OBD-II) domain; the sequence is AHPIWTRFDK…QSQSEARGER (132 aa). Residues 442–446 are binds sgRNA; the sequence is SMSEQ. The interval 519 to 628 is ruvC-I domain; the sequence is RPPYAAVFRL…LLKLPGETES (110 aa). The For DNase activity of RuvC domain role is filled by Asp-570. Residues 573–574 form a binds non-target ssDNA region; the sequence is LR. The bridge helix domain stretch occupies residues 629–658; it reads KDLRAIREERQRTLRQLRTQLAYLRLLVRC. The interval 659–784 is REC2 (Helical-II) domain; sequence GSEDVGRRER…SFFGKVSGQV (126 aa). Binds sgRNA stretches follow at residues 742–746, 753–754, 792–796, 800–819, and 835–839; these read RPKIR, VG, RFAIT, HIDHAKEDRLKKLADRIIME, and WVAKY. A ruvC-II domain region spans residues 785–900; the sequence is IRAEKGSRFA…GTMYAAFSSR (116 aa). Glu-848 (for DNase activity of RuvC domain) is an active-site residue. The interval 897–900 is binds non-target ssDNA; the sequence is FSSR. Positions 899 and 911 each coordinate phosphate. The tract at residues 901 to 974 is nuc-I domain; sequence FDARTGAPGI…SAEEGDFHQI (74 aa). Positions 973–978 are binds sgRNA; the sequence is QIHADL. The tract at residues 975–993 is ruvC-III domain; the sequence is HADLNAAQNLQQRLWSDFD. The active-site For DNase activity of RuvC domain is Asp-977. The tract at residues 994 to 1129 is nuc-II domain; sequence ISQIRLRCDW…DSACENTGDI (136 aa).

It belongs to the CRISPR-associated endonuclease Cas12b family. As to quaternary structure, monomer. The cofactor is a divalent metal cation.

Functionally, CRISPR (clustered regularly interspaced short palindromic repeat), is an adaptive immune system that provides protection against mobile genetic elements (viruses, transposable elements and conjugative plasmids). CRISPR clusters contain sequences complementary to antecedent mobile elements and target invading nucleic acids. CRISPR clusters are transcribed and processed into CRISPR RNA (crRNA). In type II CRISPR systems correct processing of pre-crRNA requires a trans-encoded small RNA (tracrRNA), endogenous ribonuclease 3 (rnc) and this protein. The tracrRNA serves as a guide for ribonuclease 3-aided processing of pre-crRNA. Protein-crRNA-tracrRNA endonucleolytically cleave dsDNA target complementary to the spacer; protein is inactive in the absence of crRNA homologous to the target and tracrRNA. Recognizes a short motif in the CRISPR repeat sequences (the 5' PAM or protospacer adjacent motif, TTN in this organism) to help distinguish self versus nonself, as targets within the bacterial CRISPR locus do not have PAMs. PAM recognition is also required for catalytic activity. Cleavage results in staggered 6-8 base 5'-overhangs 14-17 and 23-24 bases downstream of the PAM (protospacer adjacent motif) on the non-target and target strands respectively. Both target and non-target strand DNA are probably independently cleaved in the same active site. The protein is CRISPR-associated endonuclease Cas12b of Alicyclobacillus acidoterrestris (strain ATCC 49025 / DSM 3922 / CIP 106132 / NCIMB 13137 / GD3B).